A 471-amino-acid chain; its full sequence is ATP synthase subunit beta (471 aa).

153–160 contributes to the ATP binding site; that stretch reads GGAGVGKT.

It belongs to the ATPase alpha/beta chains family. In terms of assembly, F-type ATPases have 2 components, CF(1) - the catalytic core - and CF(0) - the membrane proton channel. CF(1) has five subunits: alpha(3), beta(3), gamma(1), delta(1), epsilon(1). CF(0) has four main subunits: a(1), b(1), b'(1) and c(9-12).

The protein localises to the cell membrane. It carries out the reaction ATP + H2O + 4 H(+)(in) = ADP + phosphate + 5 H(+)(out). In terms of biological role, produces ATP from ADP in the presence of a proton gradient across the membrane. The catalytic sites are hosted primarily by the beta subunits. The protein is ATP synthase subunit beta of Chloroflexus aggregans (strain MD-66 / DSM 9485).